A 157-amino-acid polypeptide reads, in one-letter code: DNA gyrase inhibitor (157 aa).

It belongs to the DNA gyrase inhibitor family. In terms of assembly, interacts with DNA gyrase.

It is found in the cytoplasm. Its function is as follows. Inhibits the supercoiling activity of DNA gyrase. Acts by inhibiting DNA gyrase at an early step, prior to (or at the step of) binding of DNA by the gyrase. It protects cells against toxins that target DNA gyrase, by inhibiting activity of these toxins and reducing the formation of lethal double-strand breaks in the cell. This is DNA gyrase inhibitor from Klebsiella pneumoniae (strain 342).